The sequence spans 207 residues: Ribosomal RNA large subunit methyltransferase E (207 aa).

Residues Gly60, Trp62, Asp80, Asp96, and Asp121 each coordinate S-adenosyl-L-methionine. Lys161 acts as the Proton acceptor in catalysis.

It belongs to the class I-like SAM-binding methyltransferase superfamily. RNA methyltransferase RlmE family.

It localises to the cytoplasm. The enzyme catalyses uridine(2552) in 23S rRNA + S-adenosyl-L-methionine = 2'-O-methyluridine(2552) in 23S rRNA + S-adenosyl-L-homocysteine + H(+). Its function is as follows. Specifically methylates the uridine in position 2552 of 23S rRNA at the 2'-O position of the ribose in the fully assembled 50S ribosomal subunit. The chain is Ribosomal RNA large subunit methyltransferase E from Azotobacter vinelandii (strain DJ / ATCC BAA-1303).